Here is a 1004-residue protein sequence, read N- to C-terminus: Polyhomeotic-like protein 1 (1004 aa).

Residues 1–22 (METESEQNSNSTNGSSSSGGSS) are compositionally biased toward low complexity. Disordered regions lie at residues 1 to 24 (METESEQNSNSTNGSSSSGGSSRP), 212 to 241 (NQQASAQGPQMQGSTQKAIPPGASPVSSLS), 261 to 355 (SLNL…NLTR), 432 to 512 (QQQQ…QLGA), 556 to 589 (RGMPGTVQSGQAHLASSPPSSQAPGALQECPPTL), and 636 to 672 (TLAVKRKADSEEERDDVSTLGSMLPAKASPVAESPKV). Residues 212-228 (NQQASAQGPQMQGSTQK) show a composition bias toward polar residues. The span at 279 to 303 (MGPGGGGQAHGGLGQLPSSGMGGGS) shows a compositional bias: gly residues. Polar residues-rich tracts occupy residues 319–329 (QTVTVSQGSQT) and 344–355 (SGQQNVGMNLTR). Residues 432 to 447 (QQQQQQQQPQATTLTA) are compositionally biased toward low complexity. A compositionally biased stretch (pro residues) spans 448 to 458 (PQPPQVPPTQQ). Residues 459–482 (VPPSQSQQQAQTLVVQPMLQSSPL) are compositionally biased toward low complexity. The span at 483 to 495 (SLPPDAAPKPPIP) shows a compositional bias: pro residues. Positions 566 to 583 (QAHLASSPPSSQAPGALQ) are enriched in low complexity. Phosphoserine is present on Ser-645. A Glycyl lysine isopeptide (Lys-Gly) (interchain with G-Cter in SUMO2) cross-link involves residue Lys-763. Residues 791-825 (LDKKANLLKCEYCGKYAPAEQFRGSKRFCSMTCAK) form an FCS-type zinc finger. Residues Cys-800, Cys-803, Cys-819, and Cys-823 each contribute to the Zn(2+) site. The tract at residues 848-928 (ANYARVRRRG…APPTPELHGI (81 aa)) is disordered. Ser-898 bears the Phosphoserine mark. Thr-922 carries the phosphothreonine modification. Positions 940–1004 (WSVEEVYEFI…CAKINVLKET (65 aa)) constitute an SAM domain.

In terms of assembly, homodimer. Component of a PRC1-like complex. Interacts with RNF2 and CBX7. Interacts with PHC2, PHC2 and BMI1.

The protein resides in the nucleus. Its function is as follows. Component of a Polycomb group (PcG) multiprotein PRC1-like complex, a complex class required to maintain the transcriptionally repressive state of many genes, including Hox genes, throughout development. PcG PRC1 complex acts via chromatin remodeling and modification of histones; it mediates monoubiquitination of histone H2A 'Lys-119', rendering chromatin heritably changed in its expressibility. Required for proper control of cellular levels of GMNN expression. The polypeptide is Polyhomeotic-like protein 1 (PHC1) (Homo sapiens (Human)).